A 545-amino-acid polypeptide reads, in one-letter code: Chaperonin GroEL (545 aa).

ATP is bound by residues 30–33 (TLGP), Lys51, 87–91 (DGTTT), Gly415, and Asp495.

It belongs to the chaperonin (HSP60) family. As to quaternary structure, forms a cylinder of 14 subunits composed of two heptameric rings stacked back-to-back. Interacts with the co-chaperonin GroES.

Its subcellular location is the cytoplasm. The enzyme catalyses ATP + H2O + a folded polypeptide = ADP + phosphate + an unfolded polypeptide.. Functionally, together with its co-chaperonin GroES, plays an essential role in assisting protein folding. The GroEL-GroES system forms a nano-cage that allows encapsulation of the non-native substrate proteins and provides a physical environment optimized to promote and accelerate protein folding. The protein is Chaperonin GroEL of Shewanella baltica (strain OS185).